We begin with the raw amino-acid sequence, 702 residues long: Ribosomal RNA large subunit methyltransferase K/L (702 aa).

Residues 43-154 enclose the THUMP domain; that stretch reads LVYQSLMWSR…KETASIALDL (112 aa).

Belongs to the methyltransferase superfamily. RlmKL family.

Its subcellular location is the cytoplasm. It carries out the reaction guanosine(2445) in 23S rRNA + S-adenosyl-L-methionine = N(2)-methylguanosine(2445) in 23S rRNA + S-adenosyl-L-homocysteine + H(+). The enzyme catalyses guanosine(2069) in 23S rRNA + S-adenosyl-L-methionine = N(2)-methylguanosine(2069) in 23S rRNA + S-adenosyl-L-homocysteine + H(+). Specifically methylates the guanine in position 2445 (m2G2445) and the guanine in position 2069 (m7G2069) of 23S rRNA. This is Ribosomal RNA large subunit methyltransferase K/L from Escherichia coli (strain SMS-3-5 / SECEC).